The following is an 862-amino-acid chain: Cytosolic carboxypeptidase 2 (862 aa).

In terms of domain architecture, Peptidase M14 spans 359 to 629 (YPYTYTDLQC…HVCDTLLDFC (271 aa)). 3 residues coordinate Zn(2+): His425, Glu428, and His521. Glu593 (proton donor/acceptor) is an active-site residue. Disordered stretches follow at residues 669-692 (SDIP…DGPP), 704-728 (NQKT…EQYQ), and 750-836 (STLQ…PNWS). Positions 674–689 (SDIESSTSGSDSSLSD) are enriched in low complexity. Basic residues predominate over residues 711–721 (NPKKKRLQTRK). Residues 813–825 (ASCSPKRSTNSSL) are compositionally biased toward polar residues.

Belongs to the peptidase M14 family. Interacts with RARRES1, KIF11 and MAPRE1. Zn(2+) is required as a cofactor. Widely expressed. Expressed in tissues with motile cilia such as testis, lung and trachea. Also detected in brain, eye, muscle, pancreas, intestine, stomach, pituitary, spleen, adrenal and kidney. Expressed in mitral and granular cells in brain.

The protein localises to the cytoplasm. The protein resides in the cytosol. It localises to the cytoskeleton. Its subcellular location is the microtubule organizing center. It is found in the centrosome. The protein localises to the centriole. The protein resides in the cilium basal body. It catalyses the reaction (L-glutamyl)(n+1)-gamma-L-glutamyl-L-glutamyl-[protein] + H2O = (L-glutamyl)(n)-gamma-L-glutamyl-L-glutamyl-[protein] + L-glutamate. Inhibited by RARRES1. In terms of biological role, metallocarboxypeptidase that mediates deglutamylation of tubulin and non-tubulin target proteins. Catalyzes the removal of polyglutamate side chains present on the gamma-carboxyl group of glutamate residues within the C-terminal tail of tubulin protein. Specifically cleaves tubulin long-side-chains, while it is not able to remove the branching point glutamate. Also catalyzes the removal of polyglutamate residues from the carboxy-terminus of non-tubulin proteins such as MYLK. The sequence is that of Cytosolic carboxypeptidase 2 from Mus musculus (Mouse).